The sequence spans 102 residues: Small ribosomal subunit protein uS14 (102 aa).

The protein belongs to the universal ribosomal protein uS14 family. Part of the 30S ribosomal subunit. Contacts proteins S3 and S10.

Its function is as follows. Binds 16S rRNA, required for the assembly of 30S particles and may also be responsible for determining the conformation of the 16S rRNA at the A site. This chain is Small ribosomal subunit protein uS14, found in Wolbachia pipientis subsp. Culex pipiens (strain wPip).